The following is a 419-amino-acid chain: F-box/LRR-repeat protein At1g67190 (419 aa).

Residues 1-48 (MDYLPVEVIGNILSRLGGARDVVIASATCRKWREACRKHLQTLSFNSA) form the F-box domain. LRR repeat units follow at residues 53–82 (YRDL…SIMM), 96–124 (WLMY…EICG), 133–157 (LAHN…LSLS), 158–183 (YVSI…ELVS), 185–209 (EIAM…YFDG), 245–272 (HFKL…DVNH), 273–297 (FTMV…RLWD), 301–326 (DDDD…SLSY), and 356–381 (INDV…IIYG).

The chain is F-box/LRR-repeat protein At1g67190 from Arabidopsis thaliana (Mouse-ear cress).